Here is a 360-residue protein sequence, read N- to C-terminus: Chorismate synthase (360 aa).

Residue Arg47 coordinates NADP(+). FMN-binding positions include 124–126, 240–241, Gly285, 300–304, and Arg326; these read RSS, NA, and KPVAT.

This sequence belongs to the chorismate synthase family. In terms of assembly, homotetramer. Requires FMNH2 as cofactor.

It catalyses the reaction 5-O-(1-carboxyvinyl)-3-phosphoshikimate = chorismate + phosphate. It participates in metabolic intermediate biosynthesis; chorismate biosynthesis; chorismate from D-erythrose 4-phosphate and phosphoenolpyruvate: step 7/7. In terms of biological role, catalyzes the anti-1,4-elimination of the C-3 phosphate and the C-6 proR hydrogen from 5-enolpyruvylshikimate-3-phosphate (EPSP) to yield chorismate, which is the branch point compound that serves as the starting substrate for the three terminal pathways of aromatic amino acid biosynthesis. This reaction introduces a second double bond into the aromatic ring system. The protein is Chorismate synthase of Cytophaga hutchinsonii (strain ATCC 33406 / DSM 1761 / CIP 103989 / NBRC 15051 / NCIMB 9469 / D465).